The sequence spans 550 residues: Aspartate--tRNA ligase (550 aa).

Glutamate 162 lines the L-aspartate pocket. Residues 186–189 are aspartate; that stretch reads QIYK. Residue arginine 208 participates in L-aspartate binding. ATP-binding positions include 208–210 and glutamine 217; that span reads RDE. Histidine 417 serves as a coordination point for L-aspartate. Glutamate 451 provides a ligand contact to ATP. L-aspartate is bound at residue arginine 458. Position 499–502 (499–502) interacts with ATP; the sequence is GIDR.

This sequence belongs to the class-II aminoacyl-tRNA synthetase family. Type 1 subfamily. In terms of assembly, homodimer.

The protein localises to the cytoplasm. It catalyses the reaction tRNA(Asp) + L-aspartate + ATP = L-aspartyl-tRNA(Asp) + AMP + diphosphate. Its function is as follows. Catalyzes the attachment of L-aspartate to tRNA(Asp) in a two-step reaction: L-aspartate is first activated by ATP to form Asp-AMP and then transferred to the acceptor end of tRNA(Asp). The chain is Aspartate--tRNA ligase from Mycoplasma genitalium (strain ATCC 33530 / DSM 19775 / NCTC 10195 / G37) (Mycoplasmoides genitalium).